We begin with the raw amino-acid sequence, 617 residues long: Proline--tRNA ligase (617 aa).

Belongs to the class-II aminoacyl-tRNA synthetase family. ProS type 1 subfamily. Homodimer.

It is found in the cytoplasm. It catalyses the reaction tRNA(Pro) + L-proline + ATP = L-prolyl-tRNA(Pro) + AMP + diphosphate. Functionally, catalyzes the attachment of proline to tRNA(Pro) in a two-step reaction: proline is first activated by ATP to form Pro-AMP and then transferred to the acceptor end of tRNA(Pro). As ProRS can inadvertently accommodate and process non-cognate amino acids such as alanine and cysteine, to avoid such errors it has two additional distinct editing activities against alanine. One activity is designated as 'pretransfer' editing and involves the tRNA(Pro)-independent hydrolysis of activated Ala-AMP. The other activity is designated 'posttransfer' editing and involves deacylation of mischarged Ala-tRNA(Pro). The misacylated Cys-tRNA(Pro) is not edited by ProRS. The sequence is that of Proline--tRNA ligase from Streptococcus pneumoniae serotype 4 (strain ATCC BAA-334 / TIGR4).